The following is a 492-amino-acid chain: Glutamyl-tRNA(Gln) amidotransferase subunit A (492 aa).

Residues K79 and S154 each act as charge relay system in the active site. S178 serves as the catalytic Acyl-ester intermediate.

It belongs to the amidase family. GatA subfamily. In terms of assembly, heterotrimer of A, B and C subunits.

It catalyses the reaction L-glutamyl-tRNA(Gln) + L-glutamine + ATP + H2O = L-glutaminyl-tRNA(Gln) + L-glutamate + ADP + phosphate + H(+). Its function is as follows. Allows the formation of correctly charged Gln-tRNA(Gln) through the transamidation of misacylated Glu-tRNA(Gln) in organisms which lack glutaminyl-tRNA synthetase. The reaction takes place in the presence of glutamine and ATP through an activated gamma-phospho-Glu-tRNA(Gln). The sequence is that of Glutamyl-tRNA(Gln) amidotransferase subunit A from Acinetobacter baylyi (strain ATCC 33305 / BD413 / ADP1).